The chain runs to 514 residues: Beta-glucosidase 21 (514 aa).

Residues 1–25 form the signal peptide; sequence MERPLHLLLVFLSSPWLLLLQGVSS. Residues glutamine 47 and histidine 147 each contribute to the a beta-D-glucoside site. Glutamate 193 (proton donor) is an active-site residue. Residues cysteine 212 and cysteine 220 are joined by a disulfide bond. N-linked (GlcNAc...) asparagine glycosylation is found at asparagine 219 and asparagine 224. Positions 336 and 406 each coordinate a beta-D-glucoside. Catalysis depends on glutamate 406, which acts as the Nucleophile. A glycan (N-linked (GlcNAc...) asparagine) is linked at asparagine 407. A beta-D-glucoside-binding residues include tryptophan 448 and phenylalanine 465. N-linked (GlcNAc...) asparagine glycosylation is present at asparagine 494.

The protein belongs to the glycosyl hydrolase 1 family.

It catalyses the reaction Hydrolysis of terminal, non-reducing beta-D-glucosyl residues with release of beta-D-glucose.. This Oryza sativa subsp. japonica (Rice) protein is Beta-glucosidase 21 (BGLU21).